The primary structure comprises 139 residues: Transcription antitermination protein NusB (139 aa).

The protein belongs to the NusB family.

Functionally, involved in transcription antitermination. Required for transcription of ribosomal RNA (rRNA) genes. Binds specifically to the boxA antiterminator sequence of the ribosomal RNA (rrn) operons. This Erwinia tasmaniensis (strain DSM 17950 / CFBP 7177 / CIP 109463 / NCPPB 4357 / Et1/99) protein is Transcription antitermination protein NusB.